The primary structure comprises 199 residues: Recombination protein RecR (199 aa).

Residues 57-72 (CSVCGNLTDDDPCNIC) form a C4-type zinc finger. One can recognise a Toprim domain in the interval 80 to 176 (STVLVVEDSK…TVTRLARGLA (97 aa)).

It belongs to the RecR family.

May play a role in DNA repair. It seems to be involved in an RecBC-independent recombinational process of DNA repair. It may act with RecF and RecO. The polypeptide is Recombination protein RecR (Streptococcus mutans serotype c (strain ATCC 700610 / UA159)).